A 436-amino-acid polypeptide reads, in one-letter code: MFDSTLNPLWQRYILAVQEEVKPALGCTEPISLALAAAVAAAELEGPVERVEAWVSPNLMKNGLGVTVPGTGMVGLPIAAALGALGGNANAGLEVLKDATAQAIADAKALLAAGKVSVKIQEPCNEILFSRAKVWNGEKWACVTIVGGHTNIVHIETHDGVVFTQQACVAEGEQESPLSVLSRTTLAEILKFVNEVPFAAIRFILDSAKLNCALSQEGLSGKWGLHIGATLEKQCERGLLAKDLSSSIVIRTSAASDARMGGATLPAMSNSGSGNQGITATMPVVVVAEHFGADDERLARALMLSHLSAIYIHNQLPRLSALCAATTAAMGAAAGMAWLVDGRYETISMAISSMIGDVSGMICDGASNSCAMKVSTSASAAWKAVLMALDDTAVTGNEGIVAHDVEQSIANLCALASHSMQQTDRQIIEIMASKAR.

Belongs to the UPF0597 family.

Functionally, thought to be a D-serine dehydratase, however it does not complement a dsdA (D-serine dehydratase) mutant in strain CFT073, suggesting it may not have that function. The polypeptide is UPF0597 protein YhaM (Escherichia coli O157:H7).